We begin with the raw amino-acid sequence, 203 residues long: ATP-dependent Clp protease proteolytic subunit (203 aa).

The Nucleophile role is filled by serine 107. The active site involves histidine 132.

The protein belongs to the peptidase S14 family. Fourteen ClpP subunits assemble into 2 heptameric rings which stack back to back to give a disk-like structure with a central cavity, resembling the structure of eukaryotic proteasomes.

It is found in the cytoplasm. It carries out the reaction Hydrolysis of proteins to small peptides in the presence of ATP and magnesium. alpha-casein is the usual test substrate. In the absence of ATP, only oligopeptides shorter than five residues are hydrolyzed (such as succinyl-Leu-Tyr-|-NHMec, and Leu-Tyr-Leu-|-Tyr-Trp, in which cleavage of the -Tyr-|-Leu- and -Tyr-|-Trp bonds also occurs).. In terms of biological role, cleaves peptides in various proteins in a process that requires ATP hydrolysis. Has a chymotrypsin-like activity. Plays a major role in the degradation of misfolded proteins. The protein is ATP-dependent Clp protease proteolytic subunit of Shewanella denitrificans (strain OS217 / ATCC BAA-1090 / DSM 15013).